The sequence spans 1059 residues: Zinc finger protein 628 (1059 aa).

6 C2H2-type zinc fingers span residues 36–58, 64–86, 92–114, 120–142, 148–170, and 176–198; these read YECGECGKSFRWSSRLLHHQRTH, YKCPDCPKAFKGSSALLYHQRGH, YQCPDCPKAFKRSSLLQIHRSVH, FICGQCGLAFKWSSHYQYHLRQH, YPCPDCPKAFKNSSSLRRHRHVH, and YTCGVCGKSFTQSTNLRQHQRVH. A Phosphothreonine modification is found at Thr-199. The segment at 204 to 226 adopts a C2H2-type 7 zinc-finger fold; that stretch reads FRCPLCPKTFTHSSNLLLHQRTH. Disordered regions lie at residues 226-247, 260-280, and 312-351; these read HGAAPAPGTASAAPPPQSREPG, LQPHSPPAPPAPPPPPPPVVP, and EHQPCPGPDAAPQPQEAPAEAPKADQPPSPLPQPPPPAAA. Positions 228-237 are enriched in low complexity; that stretch reads AAPAPGTASA. Over residues 263 to 279 the composition is skewed to pro residues; that stretch reads HSPPAPPAPPPPPPPVV. The span at 323 to 335 shows a compositional bias: low complexity; sequence PQPQEAPAEAPKA. Over residues 336-351 the composition is skewed to pro residues; that stretch reads DQPPSPLPQPPPPAAA. C2H2-type zinc fingers lie at residues 356–378, 386–408, 454–476, 482–504, 510–532, 538–560, and 566–588; these read FACLPCGKSFRTVAGLSRHQHSH, FRCGSCDGSFPQLASLLAHQQCH, YKCAECGKSFKGSSGLRYHLRDH, YQCGECGKAFKRSSLLAIHQRVH, FTCGQCGLTFKWSSHYQYHLRLH, YACGECGKAFRNTSCLRRHRHVH, and HACGVCGKSFAQTSNLRQHQRVH. Thr-589 carries the post-translational modification Phosphothreonine. 2 consecutive C2H2-type zinc fingers follow at residues 594-616 and 622-644; these read FRCPLCPKTFTHSSNLLLHQRTH and FTCPICGRGFVMAAYLQRHLRTH. Low complexity predominate over residues 644-658; the sequence is HAPANTPPSTTAPAA. Residues 644 to 674 are disordered; that stretch reads HAPANTPPSTTAPAAGPQPPAPLAAARAPPA. Repeat copies occupy residues 818–831, 832–842, 843–853, and 854–864. The 4 X approximate tandem repeats stretch occupies residues 818–864; the sequence is VQLQPLRPAPEVTTVQLQPAQEVTTVQLQPAQEVTTVQLQPAQEVTT. An interaction with TAF4B region spans residues 943-1059; that stretch reads DGEQTRLCVQ…LPAVQLVHTF (117 aa).

Interacts with TAF4B.

The protein resides in the nucleus. Functionally, transcriptional activator. Binds DNA on GT-box consensus sequence 5'-TTGGTT-3'. Plays a role in spermiogenesis. This chain is Zinc finger protein 628 (ZNF628), found in Homo sapiens (Human).